The sequence spans 451 residues: Lipase member H (451 aa).

The signal sequence occupies residues 1 to 16 (MLRLCFLLSFMCLVKS). The N-linked (GlcNAc...) asparagine glycan is linked to asparagine 66. Serine 154 (nucleophile) is an active-site residue. The Charge relay system role is filled by aspartate 178. A disulfide bridge links cysteine 233 with cysteine 246. The active-site Charge relay system is the histidine 248. 3 disulfides stabilise this stretch: cysteine 270–cysteine 281, cysteine 284–cysteine 292, and cysteine 427–cysteine 446.

The protein belongs to the AB hydrolase superfamily. Lipase family. In terms of assembly, interacts with TTMP/C3orf52.

Its subcellular location is the secreted. The protein resides in the cell membrane. It catalyses the reaction 1-hexadecanoyl-2-(9Z-octadecenoyl)-sn-glycero-3-phosphate + H2O = 2-(9Z-octadecenoyl)-sn-glycero-3-phosphate + hexadecanoate + H(+). Functionally, hydrolyzes specifically phosphatidic acid (PA) to produce 2-acyl lysophosphatidic acid (LPA; a potent bioactive lipid mediator) and fatty acid. Does not hydrolyze other phospholipids, like phosphatidylserine (PS), phosphatidylcholine (PC) and phosphatidylethanolamine (PE) or triacylglycerol (TG). The protein is Lipase member H (Liph) of Rattus norvegicus (Rat).